The primary structure comprises 386 residues: Eukaryotic translation initiation factor 3 subunit M (386 aa).

The PCI domain maps to Asn-181–His-343.

The protein belongs to the eIF-3 subunit M family. In terms of assembly, component of the eukaryotic translation initiation factor 3 (eIF-3) complex.

Its subcellular location is the cytoplasm. Functionally, component of the eukaryotic translation initiation factor 3 (eIF-3) complex, which is involved in protein synthesis of a specialized repertoire of mRNAs and, together with other initiation factors, stimulates binding of mRNA and methionyl-tRNAi to the 40S ribosome. The eIF-3 complex specifically targets and initiates translation of a subset of mRNAs involved in cell proliferation. The chain is Eukaryotic translation initiation factor 3 subunit M from Culex quinquefasciatus (Southern house mosquito).